Consider the following 181-residue polypeptide: MIQGEILGDKVLINDVEKAKEIYKLGYYGKPLDITKPKSPEDIKKPLILSLIEALYLSKKKIIEVIRDGKVIDDALLYKIGMENIPRFELLYTVYEDLREKKFVVRSGMKYGADFAIYTVAPGLEHAPYLVIAIDEEQEISPNEILGFGRVSHSTRKNLILSIVNQRNRSIRYIMFKWLKL.

Active-site residues include Tyr118, His126, and Lys157.

It belongs to the tRNA-intron endonuclease family. Archaeal short subfamily. Homotetramer; although the tetramer contains four active sites, only two participate in the cleavage. Therefore, it should be considered as a dimer of dimers.

The enzyme catalyses pretRNA = a 3'-half-tRNA molecule with a 5'-OH end + a 5'-half-tRNA molecule with a 2',3'-cyclic phosphate end + an intron with a 2',3'-cyclic phosphate and a 5'-hydroxyl terminus.. Its function is as follows. Endonuclease that removes tRNA introns. Cleaves pre-tRNA at the 5'- and 3'-splice sites to release the intron. The products are an intron and two tRNA half-molecules bearing 2',3' cyclic phosphate and 5'-OH termini. Recognizes a pseudosymmetric substrate in which 2 bulged loops of 3 bases are separated by a stem of 4 bp. In Sulfolobus acidocaldarius (strain ATCC 33909 / DSM 639 / JCM 8929 / NBRC 15157 / NCIMB 11770), this protein is tRNA-splicing endonuclease.